We begin with the raw amino-acid sequence, 92 residues long: Small ribosomal subunit protein uS19 (92 aa).

The protein belongs to the universal ribosomal protein uS19 family.

Functionally, protein S19 forms a complex with S13 that binds strongly to the 16S ribosomal RNA. The polypeptide is Small ribosomal subunit protein uS19 (Sodalis glossinidius (strain morsitans)).